The chain runs to 466 residues: Asparagine--tRNA ligase (466 aa).

The protein belongs to the class-II aminoacyl-tRNA synthetase family. In terms of assembly, homodimer.

It is found in the cytoplasm. The enzyme catalyses tRNA(Asn) + L-asparagine + ATP = L-asparaginyl-tRNA(Asn) + AMP + diphosphate + H(+). This Shewanella pealeana (strain ATCC 700345 / ANG-SQ1) protein is Asparagine--tRNA ligase.